Reading from the N-terminus, the 90-residue chain is uncharacterized protein (90 aa).

Its subcellular location is the mitochondrion. This is an uncharacterized protein from Ascobolus immersus.